A 197-amino-acid chain; its full sequence is 7-methyl-GTP pyrophosphatase (197 aa).

The active-site Proton acceptor is the aspartate 79.

This sequence belongs to the Maf family. YceF subfamily.

The protein resides in the cytoplasm. The enzyme catalyses N(7)-methyl-GTP + H2O = N(7)-methyl-GMP + diphosphate + H(+). Nucleoside triphosphate pyrophosphatase that hydrolyzes 7-methyl-GTP (m(7)GTP). May have a dual role in cell division arrest and in preventing the incorporation of modified nucleotides into cellular nucleic acids. The chain is 7-methyl-GTP pyrophosphatase from Dictyostelium discoideum (Social amoeba).